The primary structure comprises 483 residues: MSWIINGASHDWEVVIGLEVHAQIVSNSKLFSGASTEISVDPNSHVALLDVAMPGVLPVTNEYCIVQAVKTALALSCEVKKYSVFDRKNYFYPDLSFGYQITQFYHPIAKNGHIMLDESADNKKIGIARIHIEQDAGKSLHVGDKTCIDFNRAGVALMEIVTDPDLRSPEEAAEYLKKLRIILRYIGACSGDMENGALRCDANVSVRKVGESALGVRSEIKNLNSIKYVAQAIKYEAMRHVEVLESGGKVEQSTLLYDVDTGTTRTMRSKEDVCDYRYFPDPDLLPLEITDEFIASIRDTLPELPMAKMSRYMNDFSLSRYDAVILSSDRDVAEYYDEVMQRNLPGDLVAAWVTGELFGMLNKRGMCISDSPVRADALGDLLRLMVDGTISGKMAKQVFATMFETGKSASKIVEEEGLQQIADEGVLSAMVERVLEKNPDKVQQYKQGKEKLFGYFVGQIMQETKGRANPEVLNALIQSKLSQ.

The protein belongs to the GatB/GatE family. GatB subfamily. As to quaternary structure, heterotrimer of A, B and C subunits.

The enzyme catalyses L-glutamyl-tRNA(Gln) + L-glutamine + ATP + H2O = L-glutaminyl-tRNA(Gln) + L-glutamate + ADP + phosphate + H(+). It catalyses the reaction L-aspartyl-tRNA(Asn) + L-glutamine + ATP + H2O = L-asparaginyl-tRNA(Asn) + L-glutamate + ADP + phosphate + 2 H(+). Its function is as follows. Allows the formation of correctly charged Asn-tRNA(Asn) or Gln-tRNA(Gln) through the transamidation of misacylated Asp-tRNA(Asn) or Glu-tRNA(Gln) in organisms which lack either or both of asparaginyl-tRNA or glutaminyl-tRNA synthetases. The reaction takes place in the presence of glutamine and ATP through an activated phospho-Asp-tRNA(Asn) or phospho-Glu-tRNA(Gln). The polypeptide is Aspartyl/glutamyl-tRNA(Asn/Gln) amidotransferase subunit B (Anaplasma phagocytophilum (strain HZ)).